Reading from the N-terminus, the 428-residue chain is MNTSRSQAIFSAAQRLMPGGVSSPVRAFRSVGGQPIVFDRVKGAYAWDVDGNRFIDYIGSWGPAICGHAHPEVIAALQDALEKGTSFGAPCELENQLAEMVIDAVPSVEMVRFVNSGTEACMSVLRLMRAFTGRDKLIKFEGCYHGHADMFLVKAGSGVATLGLPDSPGVPRSTTSNTLTAPYNDLEAVKELFAENPDAISGVILEPVVGNAGFITPEPGFLEGLRELTREHGALLVFDEVMSGFRISYGGAQARFGVTPDLTTMGKVIGGGLPVGAYGGRAEIMEMVAPAGPMYQAGTLSGNPLAMTAGIKTLELLKQEGTYERLESTTERLINGILEAAKAAEVPITGNSIGAMFGFFLCEGPVRNFEDAKATDAERFGKLHRAMLERGIYLAPSAFEAGFTSLAHSEADIETTLKAFRESFAAVA.

K267 carries the N6-(pyridoxal phosphate)lysine modification.

This sequence belongs to the class-III pyridoxal-phosphate-dependent aminotransferase family. HemL subfamily. Homodimer. Pyridoxal 5'-phosphate is required as a cofactor.

The protein resides in the cytoplasm. It carries out the reaction (S)-4-amino-5-oxopentanoate = 5-aminolevulinate. Its pathway is porphyrin-containing compound metabolism; protoporphyrin-IX biosynthesis; 5-aminolevulinate from L-glutamyl-tRNA(Glu): step 2/2. It functions in the pathway porphyrin-containing compound metabolism; chlorophyll biosynthesis. The sequence is that of Glutamate-1-semialdehyde 2,1-aminomutase from Prochlorococcus marinus (strain MIT 9303).